A 131-amino-acid chain; its full sequence is Holo-[acyl-carrier-protein] synthase (131 aa).

Positions 9 and 58 each coordinate Mg(2+).

Belongs to the P-Pant transferase superfamily. AcpS family. It depends on Mg(2+) as a cofactor.

Its subcellular location is the cytoplasm. The enzyme catalyses apo-[ACP] + CoA = holo-[ACP] + adenosine 3',5'-bisphosphate + H(+). Functionally, transfers the 4'-phosphopantetheine moiety from coenzyme A to a Ser of acyl-carrier-protein. The sequence is that of Holo-[acyl-carrier-protein] synthase from Salmonella arizonae (strain ATCC BAA-731 / CDC346-86 / RSK2980).